Here is a 246-residue protein sequence, read N- to C-terminus: tRNA pseudouridine synthase A (246 aa).

Asp52 functions as the Nucleophile in the catalytic mechanism. Tyr111 provides a ligand contact to substrate.

This sequence belongs to the tRNA pseudouridine synthase TruA family. As to quaternary structure, homodimer.

The enzyme catalyses uridine(38/39/40) in tRNA = pseudouridine(38/39/40) in tRNA. Its function is as follows. Formation of pseudouridine at positions 38, 39 and 40 in the anticodon stem and loop of transfer RNAs. The chain is tRNA pseudouridine synthase A from Fervidobacterium nodosum (strain ATCC 35602 / DSM 5306 / Rt17-B1).